Here is a 340-residue protein sequence, read N- to C-terminus: Anthranilate phosphoribosyltransferase (340 aa).

Residues Gly-82, 85 to 86, Thr-90, 92 to 95, 110 to 118, and Ser-122 contribute to the 5-phospho-alpha-D-ribose 1-diphosphate site; these read GD, NIST, and KHGSRSVSS. Anthranilate is bound at residue Gly-82. Ser-94 provides a ligand contact to Mg(2+). Arg-168 contacts anthranilate. Residues Asp-227 and Glu-228 each contribute to the Mg(2+) site.

The protein belongs to the anthranilate phosphoribosyltransferase family. In terms of assembly, homodimer. Requires Mg(2+) as cofactor.

The enzyme catalyses N-(5-phospho-beta-D-ribosyl)anthranilate + diphosphate = 5-phospho-alpha-D-ribose 1-diphosphate + anthranilate. It functions in the pathway amino-acid biosynthesis; L-tryptophan biosynthesis; L-tryptophan from chorismate: step 2/5. Its function is as follows. Catalyzes the transfer of the phosphoribosyl group of 5-phosphorylribose-1-pyrophosphate (PRPP) to anthranilate to yield N-(5'-phosphoribosyl)-anthranilate (PRA). This chain is Anthranilate phosphoribosyltransferase, found in Hydrogenovibrio crunogenus (strain DSM 25203 / XCL-2) (Thiomicrospira crunogena).